Here is a 256-residue protein sequence, read N- to C-terminus: Lysine-rich coiled-coil protein 1 (256 aa).

Disordered stretches follow at residues 61-83 and 141-256; these read QRIP…TEDR and GHST…ILGF. 2 stretches are compositionally biased toward polar residues: residues 64–79 and 141–153; these read PSGT…SSSQ and GHST…SHRQ. Basic and acidic residues-rich tracts occupy residues 161 to 188 and 218 to 227; these read HLEE…DLNK and KNRDVSSKKE. A coiled-coil region spans residues 208–247; the sequence is TEKLKNRKEKKNRDVSSKKEDRKRRKEKKEQGEERTEEEM.

The sequence is that of Lysine-rich coiled-coil protein 1 (Krcc1) from Rattus norvegicus (Rat).